The following is a 303-amino-acid chain: Glutamyl-Q tRNA(Asp) synthetase (303 aa).

Residues Arg-9–Ser-13 and Glu-45 each bind L-glutamate. The 'HIGH' region motif lies at Pro-12–Asn-22. Zn(2+) is bound by residues Cys-100, Cys-102, Tyr-125, and Cys-129. 2 residues coordinate L-glutamate: Tyr-184 and Arg-202. The short motif at Arg-240–Arg-244 is the 'KMSKS' region element. Position 243 (Lys-243) interacts with ATP.

The protein belongs to the class-I aminoacyl-tRNA synthetase family. GluQ subfamily. Zn(2+) serves as cofactor.

In terms of biological role, catalyzes the tRNA-independent activation of glutamate in presence of ATP and the subsequent transfer of glutamate onto a tRNA(Asp). Glutamate is transferred on the 2-amino-5-(4,5-dihydroxy-2-cyclopenten-1-yl) moiety of the queuosine in the wobble position of the QUC anticodon. This chain is Glutamyl-Q tRNA(Asp) synthetase, found in Deinococcus geothermalis (strain DSM 11300 / CIP 105573 / AG-3a).